We begin with the raw amino-acid sequence, 137 residues long: Ribosome-binding factor A (137 aa).

It belongs to the RbfA family. In terms of assembly, monomer. Binds 30S ribosomal subunits, but not 50S ribosomal subunits or 70S ribosomes.

The protein resides in the cytoplasm. One of several proteins that assist in the late maturation steps of the functional core of the 30S ribosomal subunit. Associates with free 30S ribosomal subunits (but not with 30S subunits that are part of 70S ribosomes or polysomes). Required for efficient processing of 16S rRNA. May interact with the 5'-terminal helix region of 16S rRNA. The polypeptide is Ribosome-binding factor A (Allorhizobium ampelinum (strain ATCC BAA-846 / DSM 112012 / S4) (Agrobacterium vitis (strain S4))).